A 207-amino-acid chain; its full sequence is Glycerol-3-phosphate acyltransferase (207 aa).

The next 6 helical transmembrane spans lie at 1–21 (MIII…GKYF), 42–62 (ILGV…GTLA), 65–85 (IPII…FAII), 105–125 (AGVL…IFLL), 138–158 (ITVA…GFIL), and 159–179 (TDYD…IIIR).

The protein belongs to the PlsY family. Probably interacts with PlsX.

It is found in the cell membrane. It carries out the reaction an acyl phosphate + sn-glycerol 3-phosphate = a 1-acyl-sn-glycero-3-phosphate + phosphate. The protein operates within lipid metabolism; phospholipid metabolism. Functionally, catalyzes the transfer of an acyl group from acyl-phosphate (acyl-PO(4)) to glycerol-3-phosphate (G3P) to form lysophosphatidic acid (LPA). This enzyme utilizes acyl-phosphate as fatty acyl donor, but not acyl-CoA or acyl-ACP. This is Glycerol-3-phosphate acyltransferase from Streptococcus agalactiae serotype Ia (strain ATCC 27591 / A909 / CDC SS700).